A 595-amino-acid polypeptide reads, in one-letter code: uncharacterized protein (595 aa).

Positions 112 to 180 (VRPPGYDPES…KDVFGRALPT (69 aa)) are disordered. Composition is skewed to basic and acidic residues over residues 120-133 (ESAKAAEYKDEKHK) and 161-174 (RTQERKKPRPKDVF). The CCHC-type; degenerate zinc-finger motif lies at 211 to 228 (VKCLRCGNFGHQSGDRDC). Disordered regions lie at residues 254–290 (HTDPSEPLKWELKQKPGLSPPRGGFDPDDPNQQIVAE) and 310–595 (KSMS…RRRN). The segment covering 256-267 (DPSEPLKWELKQ) has biased composition (basic and acidic residues). Composition is skewed to basic residues over residues 316-331 (KKRKSKKNKRHKKHSS) and 351-364 (RGSKKRKKLKKKSK). 3 stretches are compositionally biased toward basic and acidic residues: residues 414–428 (HYYDEKHQKRKEIVD), 470–539 (VSEK…HVYE), and 547–565 (FSDRYRSTKKTESDSESNR). Residues 584–595 (RKHRYSTNRRRN) show a composition bias toward basic residues.

This is an uncharacterized protein from Arabidopsis thaliana (Mouse-ear cress).